Reading from the N-terminus, the 141-residue chain is Putative pre-16S rRNA nuclease (141 aa).

The protein belongs to the YqgF nuclease family.

It is found in the cytoplasm. Its function is as follows. Could be a nuclease involved in processing of the 5'-end of pre-16S rRNA. In Amoebophilus asiaticus (strain 5a2), this protein is Putative pre-16S rRNA nuclease.